Reading from the N-terminus, the 449-residue chain is Exodeoxyribonuclease 7 large subunit (449 aa).

It belongs to the XseA family. As to quaternary structure, heterooligomer composed of large and small subunits.

The protein resides in the cytoplasm. It carries out the reaction Exonucleolytic cleavage in either 5'- to 3'- or 3'- to 5'-direction to yield nucleoside 5'-phosphates.. Its function is as follows. Bidirectionally degrades single-stranded DNA into large acid-insoluble oligonucleotides, which are then degraded further into small acid-soluble oligonucleotides. In Salmonella paratyphi B (strain ATCC BAA-1250 / SPB7), this protein is Exodeoxyribonuclease 7 large subunit.